Consider the following 188-residue polypeptide: Elongation factor P (188 aa).

At Lys-34 the chain carries N6-(3,6-diaminohexanoyl)-5-hydroxylysine.

It belongs to the elongation factor P family. Post-translationally, may be beta-lysylated on the epsilon-amino group of Lys-34 by the combined action of EpmA and EpmB, and then hydroxylated on the C5 position of the same residue by EpmC (if this protein is present). Lysylation is critical for the stimulatory effect of EF-P on peptide-bond formation. The lysylation moiety may extend toward the peptidyltransferase center and stabilize the terminal 3-CCA end of the tRNA. Hydroxylation of the C5 position on Lys-34 may allow additional potential stabilizing hydrogen-bond interactions with the P-tRNA.

The protein resides in the cytoplasm. It functions in the pathway protein biosynthesis; polypeptide chain elongation. In terms of biological role, involved in peptide bond synthesis. Alleviates ribosome stalling that occurs when 3 or more consecutive Pro residues or the sequence PPG is present in a protein, possibly by augmenting the peptidyl transferase activity of the ribosome. Modification of Lys-34 is required for alleviation. The protein is Elongation factor P of Proteus mirabilis (strain HI4320).